Consider the following 827-residue polypeptide: Multiple RNA-binding domain-containing protein 1 (827 aa).

The 74-residue stretch at 5-78 (SRIFVKNLPP…SRISVDIAKP (74 aa)) folds into the RRM 1 domain. Disordered stretches follow at residues 77–116 (KPIA…TAAA), 176–230 (AGLE…ATDD), and 256–299 (AASG…DPES). Positions 179 to 189 (EDGESDDEYED) are enriched in acidic residues. Composition is skewed to low complexity over residues 208 to 225 (APLA…PVSL) and 256 to 270 (AASG…STSV). Over residues 277–288 (KPEEHPAEDSRE) the composition is skewed to basic and acidic residues. RRM domains lie at 308–384 (SRLF…PAAA), 489–560 (TTIL…KGPK), 599–682 (SSLF…ASHR), and 704–781 (TKLV…FAQA).

This sequence belongs to the RRM MRD1 family.

It is found in the nucleus. Its function is as follows. Involved in pre-rRNA processing. The protein is Multiple RNA-binding domain-containing protein 1 (mrd-1) of Neurospora crassa (strain ATCC 24698 / 74-OR23-1A / CBS 708.71 / DSM 1257 / FGSC 987).